A 97-amino-acid polypeptide reads, in one-letter code: Co-chaperonin GroES (97 aa).

The protein belongs to the GroES chaperonin family. In terms of assembly, heptamer of 7 subunits arranged in a ring. Interacts with the chaperonin GroEL.

The protein resides in the cytoplasm. Its function is as follows. Together with the chaperonin GroEL, plays an essential role in assisting protein folding. The GroEL-GroES system forms a nano-cage that allows encapsulation of the non-native substrate proteins and provides a physical environment optimized to promote and accelerate protein folding. GroES binds to the apical surface of the GroEL ring, thereby capping the opening of the GroEL channel. The polypeptide is Co-chaperonin GroES (Aeromonas salmonicida).